The primary structure comprises 316 residues: C-type lectin domain family 10 member A (316 aa).

Residues 1–39 (MTRTYENFQYLENKVKVQGFKNGPLPLQSLLQRLCSGPC) are Cytoplasmic-facing. Residues 5–8 (YENF) carry the Endocytosis signal motif. Residues 40–60 (HLLLSLGLGLLLLVIICVVGF) form a helical; Signal-anchor for type II membrane protein membrane-spanning segment. The Extracellular segment spans residues 61–316 (QNSKFQRDLV…GLGQTSQESH (256 aa)). Asparagine 78 and asparagine 173 each carry an N-linked (GlcNAc...) asparagine glycan. The stretch at 85–176 (AEIQALTSQG…VATLNNNAST (92 aa)) forms a coiled coil. 3 cysteine pairs are disulfide-bonded: cysteine 181/cysteine 192, cysteine 209/cysteine 304, and cysteine 282/cysteine 296. The 118-residue stretch at 188–305 (HQDSCYWFSH…CQRPYHWVCE (118 aa)) folds into the C-type lectin domain. Ca(2+) contacts are provided by valine 218, asparagine 220, glutamate 224, and aspartate 243. A glycoprotein is bound by residues glutamine 267 and aspartate 269. The Ca(2+) site is built by aspartate 269, aspartate 270, glutamate 280, and aspartate 281. Glutamate 280 lines the a glycoprotein pocket. Residues histidine 286 and asparagine 292 each coordinate a glycoprotein. Asparagine 292, aspartate 293, and glutamate 305 together coordinate Ca(2+).

Interacts with A-, B- and C-domain containing PTPRC/CD45 isoforms: isoform 1/CD45ABC, isoform 3/CD45AB, isoform 5/CD45BC and isoform 7/CD45B. Does not interact with PTPRC/CD45 isoform 2/CD45RO, a memory T cell marker. Expressed in myeloid antigen presenting cells in lymph nodes and skin (at protein level). Expressed in dermal dendritic cells (at protein level).

The protein localises to the cell membrane. Its subcellular location is the early endosome membrane. It is found in the lysosome membrane. Functionally, C-type lectin receptor involved in recognition of N-acetylgalactosamine (GalNAc)-terminated glycans by myeloid antigen presenting cells (APCs). Binds in a Ca(2+)-dependent manner to alpha- and beta-linked GalNAc residues on glycoprotein and glycolipid antigens, including alphaGalNAc- and Galbeta1-&gt;3GalNAc-O-Ser/Thr also known as Tn and T antigens, LacdiNAc epitope GalNAcbeta1-&gt;4GlcNAc and its derivative GalNAcbeta1-&gt;4-(Fucalpha1-&gt;3)GlcNAc, O-linked core 5 and 6 glycans, and GM2 and GD2 gangliosides. Acts as a signaling receptor at the interface of APC-T cell interactions. On immature dendritic cells, recognizes Tn antigen-carrying PTPRC/CD45 receptor on effector T cells and downregulates PTRPN/CD45 phosphatase activity with an impact on T cell activation threshold, cytokine production and proliferation. Modulates dendritic cell maturation toward a tolerogenic phenotype leading to generation of regulatory CD4-positive T cell subset with immune suppressive functions. Acts as an endocytic pattern recognition receptor involved in antitumor immunity. During tumorigenesis, recognizes Tn antigens and its sialylated forms Neu5Ac-Tn and Neu5Gc-Tn expressed on tumor cell mucins. On immature dendritic cells, can internalize Tn-terminated immunogens and target them to endolysosomal compartment for MHC class I and II antigen presentation to CD8-positive and CD4-positive T cells, respectively. This is C-type lectin domain family 10 member A from Homo sapiens (Human).